Consider the following 212-residue polypeptide: Urease accessory protein UreG (212 aa).

11-18 contacts GTP; that stretch reads GPVGSGKT.

Belongs to the SIMIBI class G3E GTPase family. UreG subfamily. Homodimer. UreD, UreF and UreG form a complex that acts as a GTP-hydrolysis-dependent molecular chaperone, activating the urease apoprotein by helping to assemble the nickel containing metallocenter of UreC. The UreE protein probably delivers the nickel.

Its subcellular location is the cytoplasm. Facilitates the functional incorporation of the urease nickel metallocenter. This process requires GTP hydrolysis, probably effectuated by UreG. This is Urease accessory protein UreG from Trichodesmium erythraeum (strain IMS101).